The primary structure comprises 151 residues: MNKTYLPPQDIEGKKWYVIDAEGQRLGRLATAIAMIIRGKNKPTYTPHMDTGDFVIVVNAEKVTVTGKKSSQKLYRRHSGRPGGMKTEVFSKLQARLPQRIIEEAVFGMLPKNSLGRKLHNKLKVYPGSNHPHEAQKPEKLTIQTIPGGER.

A disordered region spans residues 126–151 (YPGSNHPHEAQKPEKLTIQTIPGGER). Basic and acidic residues predominate over residues 131-140 (HPHEAQKPEK).

It belongs to the universal ribosomal protein uL13 family. In terms of assembly, part of the 50S ribosomal subunit.

Its function is as follows. This protein is one of the early assembly proteins of the 50S ribosomal subunit, although it is not seen to bind rRNA by itself. It is important during the early stages of 50S assembly. This Trichodesmium erythraeum (strain IMS101) protein is Large ribosomal subunit protein uL13.